The sequence spans 383 residues: Chorismate synthase (383 aa).

NADP(+) is bound by residues R39 and R45. FMN is bound by residues 127–129, 249–250, G294, 309–313, and R335; these read RAS, QS, and KPIPT.

The protein belongs to the chorismate synthase family. As to quaternary structure, homotetramer. FMNH2 serves as cofactor.

It catalyses the reaction 5-O-(1-carboxyvinyl)-3-phosphoshikimate = chorismate + phosphate. Its pathway is metabolic intermediate biosynthesis; chorismate biosynthesis; chorismate from D-erythrose 4-phosphate and phosphoenolpyruvate: step 7/7. Its function is as follows. Catalyzes the anti-1,4-elimination of the C-3 phosphate and the C-6 proR hydrogen from 5-enolpyruvylshikimate-3-phosphate (EPSP) to yield chorismate, which is the branch point compound that serves as the starting substrate for the three terminal pathways of aromatic amino acid biosynthesis. This reaction introduces a second double bond into the aromatic ring system. In Caldicellulosiruptor bescii (strain ATCC BAA-1888 / DSM 6725 / KCTC 15123 / Z-1320) (Anaerocellum thermophilum), this protein is Chorismate synthase.